Reading from the N-terminus, the 693-residue chain is Elongation factor G (693 aa).

The tr-type G domain maps to 8–282 (EKTRNIGIMA…AVLDYLPSPL (275 aa)). Residues 17-24 (AHVDAGKT), 81-85 (DTPGH), and 135-138 (NKMD) each bind GTP.

Belongs to the TRAFAC class translation factor GTPase superfamily. Classic translation factor GTPase family. EF-G/EF-2 subfamily.

It localises to the cytoplasm. Functionally, catalyzes the GTP-dependent ribosomal translocation step during translation elongation. During this step, the ribosome changes from the pre-translocational (PRE) to the post-translocational (POST) state as the newly formed A-site-bound peptidyl-tRNA and P-site-bound deacylated tRNA move to the P and E sites, respectively. Catalyzes the coordinated movement of the two tRNA molecules, the mRNA and conformational changes in the ribosome. The polypeptide is Elongation factor G (Enterococcus faecalis (strain ATCC 700802 / V583)).